A 268-amino-acid polypeptide reads, in one-letter code: Ribosomal RNA small subunit methyltransferase A (268 aa).

S-adenosyl-L-methionine is bound by residues Asn-23, Leu-25, Gly-50, Glu-72, Asp-94, and Asn-116.

Belongs to the class I-like SAM-binding methyltransferase superfamily. rRNA adenine N(6)-methyltransferase family. RsmA subfamily.

The protein resides in the cytoplasm. It carries out the reaction adenosine(1518)/adenosine(1519) in 16S rRNA + 4 S-adenosyl-L-methionine = N(6)-dimethyladenosine(1518)/N(6)-dimethyladenosine(1519) in 16S rRNA + 4 S-adenosyl-L-homocysteine + 4 H(+). Its function is as follows. Specifically dimethylates two adjacent adenosines (A1518 and A1519) in the loop of a conserved hairpin near the 3'-end of 16S rRNA in the 30S particle. May play a critical role in biogenesis of 30S subunits. The protein is Ribosomal RNA small subunit methyltransferase A of Mycoplasmoides gallisepticum (strain R(low / passage 15 / clone 2)) (Mycoplasma gallisepticum).